We begin with the raw amino-acid sequence, 400 residues long: Inosine-5'-monophosphate dehydrogenase (400 aa).

Positions 96-116 (KNESTPDQNLDKESTDGKDTK) are enriched in basic and acidic residues. Residues 96–125 (KNESTPDQNLDKESTDGKDTKSNNNIDAYS) are disordered. NAD(+)-binding positions include Asp163 and 212 to 214 (GIG). 2 residues coordinate K(+): Gly214 and Gly216. Ser217 provides a ligand contact to IMP. Cys219 provides a ligand contact to K(+). The active-site Thioimidate intermediate is the Cys219. IMP is bound by residues 252–254 (DGG), 275–276 (GS), and 299–303 (YRGMG). Arg315 serves as the catalytic Proton acceptor. Glu329 lines the IMP pocket. 3 residues coordinate K(+): Glu383, Ser384, and His385.

This sequence belongs to the IMPDH/GMPR family. Homotetramer. K(+) serves as cofactor.

It is found in the cytoplasm. The catalysed reaction is IMP + NAD(+) + H2O = XMP + NADH + H(+). It participates in purine metabolism; XMP biosynthesis via de novo pathway; XMP from IMP: step 1/1. With respect to regulation, mycophenolic acid (MPA) is a non-competitive inhibitor that prevents formation of the closed enzyme conformation by binding to the same site as the amobile flap. In contrast, mizoribine monophosphate (MZP) is a competitive inhibitor that induces the closed conformation. MPA is a potent inhibitor of mammalian IMPDHs but a poor inhibitor of the bacterial enzymes. MZP is a more potent inhibitor of bacterial IMPDH. Resistant to mycophenolic acid (MPA) inhibition. Its function is as follows. Catalyzes the conversion of inosine 5'-phosphate (IMP) to xanthosine 5'-phosphate (XMP), the first committed and rate-limiting step in the de novo synthesis of guanine nucleotides, and therefore plays an important role in the regulation of cell growth. The sequence is that of Inosine-5'-monophosphate dehydrogenase from Cryptosporidium parvum.